The primary structure comprises 372 residues: Putative glutamate--cysteine ligase 2 (372 aa).

This sequence belongs to the glutamate--cysteine ligase type 2 family. YbdK subfamily. As to quaternary structure, homodimer.

The catalysed reaction is L-cysteine + L-glutamate + ATP = gamma-L-glutamyl-L-cysteine + ADP + phosphate + H(+). Its function is as follows. ATP-dependent carboxylate-amine ligase which exhibits weak glutamate--cysteine ligase activity. This chain is Putative glutamate--cysteine ligase 2 (ybdK), found in Salmonella heidelberg (strain SL476).